We begin with the raw amino-acid sequence, 236 residues long: MTEHQNVDHAEIAKFEAIAERWWDLDGEFKPLHEINPLRLDFIANKTGGLFDKETLDVGCGGGILSQSMARMGAKVTGIDMGQEPLTVAKLHSLETGVNVEYIKVPAEQYASEHPARFDVVTCMEMLEHVPDPASIIHAVAELAKPGADVFFSTLNKTPKAYLYAIIGAEKLLKMVPEGTHDHKKFIKPAQLIAWAEQAGLKVRASAGLSYNPLSKQYSLNTDVSVNYILHFEKLA.

4 residues coordinate S-adenosyl-L-methionine: Arg39, Gly59, Asp80, and Met124.

Belongs to the methyltransferase superfamily. UbiG/COQ3 family.

The enzyme catalyses a 3-demethylubiquinol + S-adenosyl-L-methionine = a ubiquinol + S-adenosyl-L-homocysteine + H(+). It carries out the reaction a 3-(all-trans-polyprenyl)benzene-1,2-diol + S-adenosyl-L-methionine = a 2-methoxy-6-(all-trans-polyprenyl)phenol + S-adenosyl-L-homocysteine + H(+). It participates in cofactor biosynthesis; ubiquinone biosynthesis. O-methyltransferase that catalyzes the 2 O-methylation steps in the ubiquinone biosynthetic pathway. The sequence is that of Ubiquinone biosynthesis O-methyltransferase from Pseudoalteromonas translucida (strain TAC 125).